Reading from the N-terminus, the 611-residue chain is TANK-binding kinase 1-binding protein 1 (611 aa).

A homodimerization region spans residues 1-280 (MESMFEDDIS…QDLASNQSEC (280 aa)). Residues 48 to 162 (YGDIKERLGG…ALVETHLRQI (115 aa)) adopt a coiled-coil conformation. Serine 184 carries the phosphoserine modification. Residues 218 to 277 (TSVSVSELERRRLEEALEAAQGEARGAQLREEQLQAECERLQGELKQLQETRAQDLASNQ) adopt a coiled-coil conformation. The interaction with TBK1 and IKBKE stretch occupies residues 281-330 (DMAWVKRVGDDQVNLALAYTELTEELGRLRELSSLQGRILRTLLQEQARN). A disordered region spans residues 328–437 (ARNAGQRHSP…PPPPPGERTL (110 aa)). A compositionally biased stretch (pro residues) spans 346–361 (PACPSPSPPARPPPCA). Over residues 362–372 (PCQSPAAQRRS) the composition is skewed to low complexity. A phosphoserine mark is found at serine 365, serine 372, serine 379, serine 385, serine 400, and serine 415. Over residues 389 to 406 (PSCPSPVPQRRSPVPPSC) the composition is skewed to pro residues. Over residues 416–433 (PVPPSCPAPQPRPPPPPG) the composition is skewed to pro residues. A phosphoserine mark is found at serine 500 and serine 530. The UBZ1-type zinc finger occupies 579–605 (IRSCPLCQLGFPVGYPDDALIKHIDSH). Residues cysteine 582, cysteine 585, histidine 601, and histidine 605 each contribute to the Zn(2+) site.

In terms of assembly, homodimer. May form a heterodimer with NAP1. Interacts with TKB1 and IKBKE. Weakly interacts with DDX3X.

Functionally, adapter protein which constitutively binds TBK1 and IKBKE playing a role in antiviral innate immunity. Essential for the efficient induction of IRF-dependent transcription following infection with Sendai virus. This chain is TANK-binding kinase 1-binding protein 1, found in Mus musculus (Mouse).